We begin with the raw amino-acid sequence, 388 residues long: S-adenosylmethionine synthase (388 aa).

Histidine 14 provides a ligand contact to ATP. A Mg(2+)-binding site is contributed by aspartate 16. Glutamate 42 is a K(+) binding site. L-methionine contacts are provided by glutamate 55 and glutamine 98. Residues 98–108 are flexible loop; sequence QSAEISSAVDQ. Residues 166-168, aspartate 242, 248-249, alanine 265, and lysine 269 each bind ATP; these read DGK and RK. Aspartate 242 contributes to the L-methionine binding site. L-methionine is bound at residue lysine 273.

Belongs to the AdoMet synthase family. In terms of assembly, homotetramer; dimer of dimers. It depends on Mg(2+) as a cofactor. K(+) is required as a cofactor.

The protein localises to the cytoplasm. The enzyme catalyses L-methionine + ATP + H2O = S-adenosyl-L-methionine + phosphate + diphosphate. Its pathway is amino-acid biosynthesis; S-adenosyl-L-methionine biosynthesis; S-adenosyl-L-methionine from L-methionine: step 1/1. Its function is as follows. Catalyzes the formation of S-adenosylmethionine (AdoMet) from methionine and ATP. The overall synthetic reaction is composed of two sequential steps, AdoMet formation and the subsequent tripolyphosphate hydrolysis which occurs prior to release of AdoMet from the enzyme. This chain is S-adenosylmethionine synthase, found in Oenococcus oeni (strain ATCC BAA-331 / PSU-1).